Consider the following 222-residue polypeptide: Thymidylate kinase (222 aa).

7–14 contacts ATP; the sequence is GIDGAGKS.

This sequence belongs to the thymidylate kinase family.

It catalyses the reaction dTMP + ATP = dTDP + ADP. Functionally, phosphorylation of dTMP to form dTDP in both de novo and salvage pathways of dTTP synthesis. The polypeptide is Thymidylate kinase (Chlorobium chlorochromatii (strain CaD3)).